A 481-amino-acid chain; its full sequence is UDP-glucose 6-dehydrogenase 1 (481 aa).

Residues 8-13 (GAGYVG), D33, R38, 86-90 (VNTPT), 127-128 (ST), and E161 each bind NAD(+). Substrate-binding positions include 157-161 (EFLAE), 216-223 (KLAANAFL), and 256-269 (RIGPKFLNASVGFG). The Nucleophile role is filled by C272. Position 272–275 (272–275 (CFQK)) interacts with NAD(+). Position 334-335 (334-335 (FK)) interacts with substrate. R342 provides a ligand contact to NAD(+). Position 448 (R448) interacts with substrate.

This sequence belongs to the UDP-glucose/GDP-mannose dehydrogenase family.

The enzyme catalyses UDP-alpha-D-glucose + 2 NAD(+) + H2O = UDP-alpha-D-glucuronate + 2 NADH + 3 H(+). It functions in the pathway nucleotide-sugar biosynthesis; UDP-alpha-D-glucuronate biosynthesis; UDP-alpha-D-glucuronate from UDP-alpha-D-glucose: step 1/1. With respect to regulation, inhibited by UDP-xylose. In terms of biological role, involved in the biosynthesis of UDP-glucuronic acid (UDP-GlcA), providing nucleotide sugars for cell-wall polymers. The chain is UDP-glucose 6-dehydrogenase 1 (UGD1) from Arabidopsis thaliana (Mouse-ear cress).